The chain runs to 943 residues: uncharacterized protein (943 aa).

Methionine 1 carries the post-translational modification N-acetylmethionine. Disordered stretches follow at residues 37-63 (DETP…QQQQ), 152-177 (KHQF…DDEV), 315-381 (LPMN…QQLQ), 397-472 (QNVP…PLKK), and 515-546 (EREA…ESDD). Positions 41–58 (ISRNGNDSNINIQPSSVP) are enriched in polar residues. A compositionally biased stretch (basic residues) spans 152-162 (KHQFGKSKKNT). The segment covering 318-358 (NNYNNHPGQFQNTPPVMPSGQQPPQQPRTLSLTNGPRYSPQ) has biased composition (polar residues). Low complexity predominate over residues 367–381 (QQISQRQQQQQQQLQ). Residues 397-409 (QNVPQGFNPWSPN) are compositionally biased toward polar residues. A compositionally biased stretch (low complexity) spans 417 to 433 (SMKQPISQSSISSKNNS). The segment covering 434–470 (AYSIPNVQNNSLTTFSPSSPTDATAMPNSTKQGSSPL) has biased composition (polar residues). A compositionally biased stretch (basic and acidic residues) spans 515-533 (EREALVEEKEKERAEKNTE). 3 positions are modified to phosphoserine: serine 553, serine 586, and serine 619. The interval 616-639 (EFPSPGKYNSNSDNGEMNTTNEVD) is disordered. Residues 622–639 (KYNSNSDNGEMNTTNEVD) are compositionally biased toward polar residues. A Phosphoserine modification is found at serine 649. The disordered stretch occupies residues 654–683 (IPERDPKRNVSDATIKRRESDGNGRRLSNV). Positions 655–677 (PERDPKRNVSDATIKRRESDGNG) are enriched in basic and acidic residues. Phosphoserine occurs at positions 681, 766, and 771.

This is an uncharacterized protein from Saccharomyces cerevisiae (strain ATCC 204508 / S288c) (Baker's yeast).